A 427-amino-acid polypeptide reads, in one-letter code: Histidine--tRNA ligase (427 aa).

This sequence belongs to the class-II aminoacyl-tRNA synthetase family. Homodimer.

Its subcellular location is the cytoplasm. The enzyme catalyses tRNA(His) + L-histidine + ATP = L-histidyl-tRNA(His) + AMP + diphosphate + H(+). The protein is Histidine--tRNA ligase of Mannheimia succiniciproducens (strain KCTC 0769BP / MBEL55E).